We begin with the raw amino-acid sequence, 271 residues long: MASLEIIKLEWATPIFKVVEHSQDGLYILLQGQVSWQNSSQTYDLDEGNMLFLRRGSYAVRCGTKEPCQLLWIPLPGSFLSTFLHRFGSLLSEIRRDNSTPKPLLIFNISPILSQSIQNLCAILERSDFPSVLTQLRIEELLLLLAFSSQGTLFLSALRHLGNRPEERLQKFMEENYLQGWKLSKFAREFGMGLTTFKELFGTVYGISPRAWISERRILYAHQLLLNCKMSIVDIAMEAGFSSQSYFTQSYRRRFGCTPSQARLTKIATTG.

In terms of domain architecture, HTH araC/xylS-type spans 167 to 265 (ERLQKFMEEN…GCTPSQARLT (99 aa)). 2 DNA-binding regions (H-T-H motif) span residues 184–205 (SKFA…GTVY) and 232–255 (IVDI…RRRF).

Transcriptional activator of the Yersinia virulence regulon. This chain is Virulence regulon transcriptional activator VirF (virF), found in Yersinia enterocolitica serotype O:8 / biotype 1B (strain NCTC 13174 / 8081).